The sequence spans 278 residues: MRIRHRLCRFRKSKHVRHQRFRSRIFHRDSAVAKEMKKPFVVVLTGAGISAESGIRTFRADDGLWEDHRVEDVATPEGYRRDPELVQRFYNERRRQLQQPDIAPNAAHFALADLEAVLGDNLVLITQNIDNLHERAGSKRVIHMHGELLKVRCTQSGQVLDWQGDLSADERCHCCQFPSPLRPHIVWFGEMPMGMDDIYQALAEADFFISIGTSGHVYPAAGFVHESHLHGAHTVELNLEPSQVESQFDEKHYGLASKVVPEYIREFLTTCGENRQGD.

Residues 22-270 (RSRIFHRDSA…PEYIREFLTT (249 aa)) enclose the Deacetylase sirtuin-type domain. Residue 46–65 (GAGISAESGIRTFRADDGLW) coordinates NAD(+). Residues Tyr90 and Arg93 each coordinate substrate. 127–130 (QNID) lines the NAD(+) pocket. His145 serves as the catalytic Proton acceptor. Zn(2+) contacts are provided by Cys153 and Cys172. NAD(+)-binding positions include 212 to 214 (GTS), 238 to 240 (NLE), and Ala256.

It belongs to the sirtuin family. Class III subfamily. Requires Zn(2+) as cofactor.

Its subcellular location is the cytoplasm. It catalyses the reaction N(6)-acetyl-L-lysyl-[protein] + NAD(+) + H2O = 2''-O-acetyl-ADP-D-ribose + nicotinamide + L-lysyl-[protein]. It carries out the reaction N(6)-succinyl-L-lysyl-[protein] + NAD(+) + H2O = 2''-O-succinyl-ADP-D-ribose + nicotinamide + L-lysyl-[protein]. The catalysed reaction is N(6)-(2-hydroxyisobutanoyl)-L-lysyl-[protein] + NAD(+) + H2O = 2''-O-(2-hydroxyisobutanoyl)-ADP-D-ribose + nicotinamide + L-lysyl-[protein]. Its function is as follows. NAD-dependent lysine deacetylase that specifically removes acetyl groups on target proteins. Also acts as a protein-lysine deacylase by mediating protein desuccinylation and de-2-hydroxyisobutyrylation. Modulates the activities of several proteins which are inactive in their acylated form. This chain is NAD-dependent protein deacylase, found in Yersinia pestis.